The chain runs to 357 residues: UDP-N-acetylglucosamine 2-epimerase homolog (357 aa).

Belongs to the UDP-N-acetylglucosamine 2-epimerase family.

This Methanococcus maripaludis (strain DSM 14266 / JCM 13030 / NBRC 101832 / S2 / LL) protein is UDP-N-acetylglucosamine 2-epimerase homolog.